The sequence spans 125 residues: Large ribosomal subunit protein bL12 (125 aa).

This sequence belongs to the bacterial ribosomal protein bL12 family. As to quaternary structure, homodimer. Part of the ribosomal stalk of the 50S ribosomal subunit. Forms a multimeric L10(L12)X complex, where L10 forms an elongated spine to which 2 to 4 L12 dimers bind in a sequential fashion. Binds GTP-bound translation factors.

Its function is as follows. Forms part of the ribosomal stalk which helps the ribosome interact with GTP-bound translation factors. Is thus essential for accurate translation. In Helicobacter acinonychis (strain Sheeba), this protein is Large ribosomal subunit protein bL12.